The chain runs to 61 residues: Photosystem II reaction center protein K (61 aa).

A propeptide spanning residues 1–24 (MLNIFSLISICLNSALYSSSFFFG) is cleaved from the precursor. The helical transmembrane segment at 40–60 (MPVIPVFFFLLAFVWQAAVSF) threads the bilayer.

Belongs to the PsbK family. In terms of assembly, PSII is composed of 1 copy each of membrane proteins PsbA, PsbB, PsbC, PsbD, PsbE, PsbF, PsbH, PsbI, PsbJ, PsbK, PsbL, PsbM, PsbT, PsbX, PsbY, PsbZ, Psb30/Ycf12, at least 3 peripheral proteins of the oxygen-evolving complex and a large number of cofactors. It forms dimeric complexes.

Its subcellular location is the plastid. The protein resides in the chloroplast thylakoid membrane. In terms of biological role, one of the components of the core complex of photosystem II (PSII). PSII is a light-driven water:plastoquinone oxidoreductase that uses light energy to abstract electrons from H(2)O, generating O(2) and a proton gradient subsequently used for ATP formation. It consists of a core antenna complex that captures photons, and an electron transfer chain that converts photonic excitation into a charge separation. The protein is Photosystem II reaction center protein K of Jasminum nudiflorum (Winter jasmine).